A 250-amino-acid chain; its full sequence is Tripartite motif-containing protein 74 (250 aa).

An RING-type zinc finger spans residues 16–57 (CPICLEVFKESLMLQCGHSYCKGCLVSLSYHLDTKVRCPMCW). A B box-type zinc finger spans residues 84–125 (PEPKVCVHHRNPLSLFCEKDQELICGLCGLLGSHQHHPVTPV). Residues cysteine 89, histidine 92, cysteine 111, and histidine 117 each contribute to the Zn(2+) site. Coiled coils occupy residues 125-169 (VSTV…NESD) and 204-235 (LVASLDMQLEQAQGTRERLAQAECVLEQFGNE).

This sequence belongs to the TRIM/RBCC family.

The polypeptide is Tripartite motif-containing protein 74 (TRIM74) (Homo sapiens (Human)).